The following is a 317-amino-acid chain: MSEIFEDKTENGKVRPWRERKIENVRYAEYLAILEFKRAHDVRGCGEVLRFRKIGEHLKLYQTWFCHKRLCPLCNWRRSMKNSSQLKQIIAEAVAREPKGRFLFLTLTVKNAHSAEELKVSLRALTKAFNKLTRYKKVTKNLLGYLRSTEITVNEQDGSYNQHLHVLLFVKSSYFKNSNNYLAQAEWAKLWQKALKVDYEPVVHVQAVKANKRKGTDSLQASAEETAKYEVKSADYMTADDERNLVVIKNLEYALAGTRQISYGGLLKQIKQDLKLEDVENGDLVHVGDEDYTKEQMEAAEEVVAKWDFNKQNYFIW.

Residue Tyr229 participates in DNA binding.

This sequence belongs to the Gram-positive plasmids replication protein type 1 family.

Functionally, produces a single-strand nick in a specific site of the plasmid, and this nick results in single-strand replication by rolling circle mechanism. In Lactiplantibacillus plantarum (Lactobacillus plantarum), this protein is Protein rep (rep).